A 47-amino-acid polypeptide reads, in one-letter code: Large ribosomal subunit protein bL34 (47 aa).

Composition is skewed to basic residues over residues 1-22 and 36-47; these read MAKGKRTFQPNNRRRSRVHGFR and ARRRKGRKSLTA. The tract at residues 1 to 47 is disordered; it reads MAKGKRTFQPNNRRRSRVHGFRSRMSTRAGRAIVSARRRKGRKSLTA.

This sequence belongs to the bacterial ribosomal protein bL34 family.

This chain is Large ribosomal subunit protein bL34, found in Corynebacterium kroppenstedtii (strain DSM 44385 / JCM 11950 / CIP 105744 / CCUG 35717).